A 225-amino-acid chain; its full sequence is Leucyl/phenylalanyl-tRNA--protein transferase (225 aa).

This sequence belongs to the L/F-transferase family.

It is found in the cytoplasm. It carries out the reaction N-terminal L-lysyl-[protein] + L-leucyl-tRNA(Leu) = N-terminal L-leucyl-L-lysyl-[protein] + tRNA(Leu) + H(+). The enzyme catalyses N-terminal L-arginyl-[protein] + L-leucyl-tRNA(Leu) = N-terminal L-leucyl-L-arginyl-[protein] + tRNA(Leu) + H(+). The catalysed reaction is L-phenylalanyl-tRNA(Phe) + an N-terminal L-alpha-aminoacyl-[protein] = an N-terminal L-phenylalanyl-L-alpha-aminoacyl-[protein] + tRNA(Phe). Functionally, functions in the N-end rule pathway of protein degradation where it conjugates Leu, Phe and, less efficiently, Met from aminoacyl-tRNAs to the N-termini of proteins containing an N-terminal arginine or lysine. This chain is Leucyl/phenylalanyl-tRNA--protein transferase, found in Nitrobacter hamburgensis (strain DSM 10229 / NCIMB 13809 / X14).